The chain runs to 199 residues: Recombination protein RecR (199 aa).

The segment at 58 to 73 (CKICFNITDKEVCDIC) adopts a C4-type zinc-finger fold. Residues 81-176 (STICVVSHPM…KVTRIAHGIP (96 aa)) form the Toprim domain.

The protein belongs to the RecR family.

May play a role in DNA repair. It seems to be involved in an RecBC-independent recombinational process of DNA repair. It may act with RecF and RecO. The sequence is that of Recombination protein RecR from Caldanaerobacter subterraneus subsp. tengcongensis (strain DSM 15242 / JCM 11007 / NBRC 100824 / MB4) (Thermoanaerobacter tengcongensis).